The chain runs to 510 residues: Internal alternative NAD(P)H-ubiquinone oxidoreductase A1, mitochondrial (510 aa).

Residues 1–48 (MLWIKNLARISQTTSSSVGNVFRNPESYTLSSRFCTALQKQQVTDTVQ) constitute a mitochondrion transit peptide. 75 to 105 (RVLVLGSGWAGCRVLKGIDTSIYDVVCVSPR) lines the FAD pocket. An NAD(+)-binding site is contributed by 242–278 (LHCVVVGGGPTGVEFSGELSDFIMKDVRQRYSHVKDD). A Microbody targeting signal motif is present at residues 501–510 (FVFGRDISRI).

It belongs to the NADH dehydrogenase family. It depends on FAD as a cofactor. Expressed in seedlings, cotyledons, young leaves, stems and flowers and, to a lower extent, in roots and buds.

The protein resides in the mitochondrion inner membrane. The protein localises to the peroxisome. The catalysed reaction is a quinone + NADH + H(+) = a quinol + NAD(+). It catalyses the reaction a ubiquinone + NADH + H(+) = a ubiquinol + NAD(+). Alternative NADH-ubiquinone oxidoreductase which catalyzes the oxidation of mitochondrial NADH does not translocate protons across the inner mitochondrial membrane. The protein is Internal alternative NAD(P)H-ubiquinone oxidoreductase A1, mitochondrial (NDA1) of Arabidopsis thaliana (Mouse-ear cress).